The sequence spans 322 residues: AA9 family lytic polysaccharide monooxygenase B (322 aa).

A signal peptide spans 1-17 (MFSKSIIAASLLTAVTA). Cu(2+) is bound at residue H18. N53 and N68 each carry an N-linked (GlcNAc...) asparagine glycan. Residues C56 and C173 are joined by a disulfide bond. H87 lines the Cu(2+) pocket. N-linked (GlcNAc...) asparagine glycosylation is found at N121 and N133. 2 residues coordinate O2: H159 and Q168. Position 170 (Y170) interacts with Cu(2+). N197 is a glycosylation site (N-linked (GlcNAc...) asparagine).

It belongs to the polysaccharide monooxygenase AA9 family. It depends on Cu(2+) as a cofactor.

Its subcellular location is the secreted. The enzyme catalyses [(1-&gt;4)-beta-D-glucosyl]n+m + reduced acceptor + O2 = 4-dehydro-beta-D-glucosyl-[(1-&gt;4)-beta-D-glucosyl]n-1 + [(1-&gt;4)-beta-D-glucosyl]m + acceptor + H2O.. Its function is as follows. Lytic polysaccharide monooxygenase (LPMO) that depolymerizes crystalline and amorphous polysaccharides via the oxidation of scissile alpha- or beta-(1-4)-glycosidic bonds, yielding C1 and C4 oxidation products. Catalysis by LPMOs requires the reduction of the active-site copper from Cu(II) to Cu(I) by a reducing agent and H(2)O(2) or O(2) as a cosubstrate. The sequence is that of AA9 family lytic polysaccharide monooxygenase B from Botryotinia fuckeliana (strain B05.10) (Noble rot fungus).